The primary structure comprises 82 residues: Modifier of protein aggregation 4 (82 aa).

Residues 1–23 are compositionally biased toward basic and acidic residues; it reads MTRGNQRDLAREKNQKKLADQKK. Disordered regions lie at residues 1–41 and 63–82; these read MTRG…MDAR and EAAA…PLKM.

It belongs to the SERF family.

It localises to the cytoplasm. It is found in the cytosol. The protein localises to the nucleus. Positive regulator of protein aggregation and age-related proteotoxicity. Induces conformational changes in aggregation-prone proteins, driving them into compact formations preceding the formation of aggregates. The polypeptide is Modifier of protein aggregation 4 (Caenorhabditis elegans).